A 704-amino-acid polypeptide reads, in one-letter code: Serotransferrin (704 aa).

An N-terminal signal peptide occupies residues 1–19; that stretch reads MRPAVRALLACAVLGLCLA. Transferrin-like domains follow at residues 25–351 and 364–689; these read VRWC…NLRE and VKWC…NLRQ. Intrachain disulfides connect cysteine 28–cysteine 66 and cysteine 38–cysteine 57. At arginine 42 the chain carries Dimethylated arginine. Fe(3+) contacts are provided by aspartate 81 and tyrosine 113. 5 disulfide bridges follow: cysteine 136–cysteine 217, cysteine 176–cysteine 192, cysteine 179–cysteine 200, cysteine 189–cysteine 202, and cysteine 250–cysteine 264. The hydrogencarbonate site is built by threonine 138, arginine 142, alanine 144, and glycine 145. Fe(3+) is bound at residue tyrosine 211. Histidine 272 serves as a coordination point for Fe(3+). 11 cysteine pairs are disulfide-bonded: cysteine 362-cysteine 622, cysteine 367-cysteine 399, cysteine 377-cysteine 390, cysteine 424-cysteine 699, cysteine 441-cysteine 663, cysteine 473-cysteine 549, cysteine 497-cysteine 690, cysteine 507-cysteine 521, cysteine 518-cysteine 532, cysteine 589-cysteine 603, and cysteine 641-cysteine 646. Fe(3+) contacts are provided by aspartate 414 and tyrosine 449. Hydrogencarbonate contacts are provided by threonine 475, arginine 479, alanine 481, and glycine 482. An N-linked (GlcNAc...) asparagine glycan is attached at asparagine 514. Tyrosine 543 contacts Fe(3+). Residue histidine 611 coordinates Fe(3+). A Phosphoserine modification is found at serine 691.

The protein belongs to the transferrin family. Monomer. Part of a complex composed of SLC40A1/ferroportin, TF/transferrin and HEPH/hephaestin that transfers iron from cells to transferrin. As to expression, expressed by the liver and secreted in plasma.

It is found in the secreted. Functionally, transferrins are iron binding transport proteins which can bind two Fe(3+) ions in association with the binding of an anion, usually bicarbonate. It is responsible for the transport of iron from sites of absorption and heme degradation to those of storage and utilization. Serum transferrin may also have a further role in stimulating cell proliferation. The chain is Serotransferrin (TF) from Bos taurus (Bovine).